We begin with the raw amino-acid sequence, 297 residues long: Undecaprenyl-diphosphatase (297 aa).

7 helical membrane passes run 39–59, 85–105, 113–133, 151–171, 190–210, 220–240, and 249–269; these read PGAA…LIYF, ARLA…GLTL, FRSL…LLVV, GILI…RSGT, SFLL…KHLL, ALWV…AWLL, and LVFV…LQTG.

It belongs to the UppP family.

It is found in the cell inner membrane. The enzyme catalyses di-trans,octa-cis-undecaprenyl diphosphate + H2O = di-trans,octa-cis-undecaprenyl phosphate + phosphate + H(+). Catalyzes the dephosphorylation of undecaprenyl diphosphate (UPP). Confers resistance to bacitracin. This chain is Undecaprenyl-diphosphatase, found in Myxococcus xanthus (strain DK1622).